The sequence spans 176 residues: Large ribosomal subunit protein eL6A (176 aa).

Ser-2 carries the N-acetylserine modification. Ser-12 is subject to Phosphoserine. Lys-128 is covalently cross-linked (Glycyl lysine isopeptide (Lys-Gly) (interchain with G-Cter in ubiquitin)).

This sequence belongs to the eukaryotic ribosomal protein eL6 family. Component of the large ribosomal subunit (LSU). Mature yeast ribosomes consist of a small (40S) and a large (60S) subunit. The 40S small subunit contains 1 molecule of ribosomal RNA (18S rRNA) and 33 different proteins (encoded by 57 genes). The large 60S subunit contains 3 rRNA molecules (25S, 5.8S and 5S rRNA) and 46 different proteins (encoded by 81 genes). In terms of processing, N-terminally acetylated by acetyltransferase NatA.

It is found in the cytoplasm. Component of the ribosome, a large ribonucleoprotein complex responsible for the synthesis of proteins in the cell. The small ribosomal subunit (SSU) binds messenger RNAs (mRNAs) and translates the encoded message by selecting cognate aminoacyl-transfer RNA (tRNA) molecules. The large subunit (LSU) contains the ribosomal catalytic site termed the peptidyl transferase center (PTC), which catalyzes the formation of peptide bonds, thereby polymerizing the amino acids delivered by tRNAs into a polypeptide chain. The nascent polypeptides leave the ribosome through a tunnel in the LSU and interact with protein factors that function in enzymatic processing, targeting, and the membrane insertion of nascent chains at the exit of the ribosomal tunnel. This chain is Large ribosomal subunit protein eL6A, found in Saccharomyces cerevisiae (strain ATCC 204508 / S288c) (Baker's yeast).